Reading from the N-terminus, the 279-residue chain is Large ribosomal subunit protein uL2 (279 aa).

The interval 223–279 (TVRGSAMNPNDHPHGGGEGRSPVGMDAPRTPWGKRHMGVKTRNNKKSSTSMIVRRRK) is disordered. Basic residues predominate over residues 254–267 (WGKRHMGVKTRNNK).

It belongs to the universal ribosomal protein uL2 family. Part of the 50S ribosomal subunit. Forms a bridge to the 30S subunit in the 70S ribosome.

In terms of biological role, one of the primary rRNA binding proteins. Required for association of the 30S and 50S subunits to form the 70S ribosome, for tRNA binding and peptide bond formation. It has been suggested to have peptidyltransferase activity; this is somewhat controversial. Makes several contacts with the 16S rRNA in the 70S ribosome. The polypeptide is Large ribosomal subunit protein uL2 (Ureaplasma parvum serovar 3 (strain ATCC 27815 / 27 / NCTC 11736)).